The sequence spans 239 residues: Large ribosomal subunit protein uL1 (239 aa).

It belongs to the universal ribosomal protein uL1 family. Part of the 50S ribosomal subunit.

In terms of biological role, binds directly to 23S rRNA. The L1 stalk is quite mobile in the ribosome, and is involved in E site tRNA release. Its function is as follows. Protein L1 is also a translational repressor protein, it controls the translation of the L11 operon by binding to its mRNA. The sequence is that of Large ribosomal subunit protein uL1 from Rickettsia conorii (strain ATCC VR-613 / Malish 7).